The primary structure comprises 215 residues: MSITAAMVKEIREKTGAGMMDCKKALTEASGNMEKATEILREKGLAAVAKKAGRIASEGIVESYIHGGRIGVLVEVNSETDFVAKNQEFKDFVKDVAMHIAATNPQYVKRDEVDPLIIEKEKEFLTKQALNEGKPEKIVEKMVEGRIDKFLKEICLLDQPFVKNPDVTIGDLLTEKIAKIGENLSIRRFVRFEVGEGIEKKEENFAEEVAKQMAK.

An involved in Mg(2+) ion dislocation from EF-Tu region spans residues 80-83 (TDFV).

This sequence belongs to the EF-Ts family.

The protein resides in the cytoplasm. In terms of biological role, associates with the EF-Tu.GDP complex and induces the exchange of GDP to GTP. It remains bound to the aminoacyl-tRNA.EF-Tu.GTP complex up to the GTP hydrolysis stage on the ribosome. This chain is Elongation factor Ts, found in Alkaliphilus metalliredigens (strain QYMF).